A 481-amino-acid chain; its full sequence is Aspartyl/glutamyl-tRNA(Asn/Gln) amidotransferase subunit B (481 aa).

The segment at 29–50 (SSSKSSHTDPKNTNISPIDLGH) is disordered.

This sequence belongs to the GatB/GatE family. GatB subfamily. In terms of assembly, heterotrimer of A, B and C subunits.

It carries out the reaction L-glutamyl-tRNA(Gln) + L-glutamine + ATP + H2O = L-glutaminyl-tRNA(Gln) + L-glutamate + ADP + phosphate + H(+). It catalyses the reaction L-aspartyl-tRNA(Asn) + L-glutamine + ATP + H2O = L-asparaginyl-tRNA(Asn) + L-glutamate + ADP + phosphate + 2 H(+). Its function is as follows. Allows the formation of correctly charged Asn-tRNA(Asn) or Gln-tRNA(Gln) through the transamidation of misacylated Asp-tRNA(Asn) or Glu-tRNA(Gln) in organisms which lack either or both of asparaginyl-tRNA or glutaminyl-tRNA synthetases. The reaction takes place in the presence of glutamine and ATP through an activated phospho-Asp-tRNA(Asn) or phospho-Glu-tRNA(Gln). The sequence is that of Aspartyl/glutamyl-tRNA(Asn/Gln) amidotransferase subunit B from Malacoplasma penetrans (strain HF-2) (Mycoplasma penetrans).